Here is a 181-residue protein sequence, read N- to C-terminus: Organelle RRM domain-containing protein 6, chloroplastic (181 aa).

Residues 1–44 constitute a chloroplast transit peptide; the sequence is MAISLGRVVVPSCTISGDRLFIPNFSAICSVSCGRINVGTGVIS. In terms of domain architecture, RRM spans 77-155; that stretch reads TKLYVSGLSF…RVIFVEEAKT (79 aa). Basic and acidic residues predominate over residues 155-169; sequence TRSDMSRAKPRRDFP. The segment at 155-181 is disordered; sequence TRSDMSRAKPRRDFPKPQSKPRTFRTW.

Interacts with MORF8/RIP1, MORF2/RIP2, MORF9/RIP9 and VAR3/OZ1.

It is found in the plastid. It localises to the chloroplast. Functionally, involved in C-to-U editing of chloroplastic RNA. Required for the photosynthetic subunit psbF transcript editing in chloroplast. The protein is Organelle RRM domain-containing protein 6, chloroplastic of Arabidopsis thaliana (Mouse-ear cress).